A 370-amino-acid polypeptide reads, in one-letter code: Cytochrome b (370 aa).

The next 4 helical transmembrane spans lie at 25–45 (FGSM…FLAI), 69–90 (WIMQ…YIHI), 105–125 (WLSG…GYVL), and 170–190 (FFAL…IHII). Heme b-binding residues include His75 and His89. Residues His174 and His188 each contribute to the heme b site. His193 contacts a ubiquinone. A run of 4 helical transmembrane segments spans residues 218 to 238 (YKDM…MSFT), 280 to 300 (LGGT…PFTH), 312 to 332 (LTQI…WTAT), and 339 to 358 (FISI…IINP).

This sequence belongs to the cytochrome b family. The cytochrome bc1 complex contains 3 respiratory subunits (MT-CYB, CYC1 and UQCRFS1), 2 core proteins (UQCRC1 and UQCRC2) and probably 6 low-molecular weight proteins. The cofactor is heme b.

Its subcellular location is the mitochondrion inner membrane. Its function is as follows. Component of the ubiquinol-cytochrome c reductase complex (complex III or cytochrome b-c1 complex) that is part of the mitochondrial respiratory chain. The b-c1 complex mediates electron transfer from ubiquinol to cytochrome c. Contributes to the generation of a proton gradient across the mitochondrial membrane that is then used for ATP synthesis. The protein is Cytochrome b (MT-CYB) of Bungarus fasciatus (Banded krait).